The sequence spans 167 residues: Large ribosomal subunit protein uL23 (167 aa).

Residues methionine 1 to lysine 118 form a large ribosomal subunit protein uL23 region. Disordered regions lie at residues phenylalanine 91 to lysine 112 and lysine 136 to asparagine 167. Composition is skewed to basic and acidic residues over residues glutamine 97–lysine 112 and lysine 136–asparagine 157. A unknown region spans residues lysine 119–asparagine 167. The span at glutamine 158–asparagine 167 shows a compositional bias: polar residues.

The protein belongs to the universal ribosomal protein uL23 family. As to quaternary structure, part of the 50S ribosomal subunit. Contacts protein L29, and trigger factor when it is bound to the ribosome.

In terms of biological role, one of the early assembly proteins it binds 23S rRNA. One of the proteins that surrounds the polypeptide exit tunnel on the outside of the ribosome. Forms the main docking site for trigger factor binding to the ribosome. The polypeptide is Large ribosomal subunit protein uL23 (Mesomycoplasma hyopneumoniae (strain J / ATCC 25934 / NCTC 10110) (Mycoplasma hyopneumoniae)).